A 1004-amino-acid chain; its full sequence is 2-oxoglutarate dehydrogenase E1 component (1004 aa).

Belongs to the alpha-ketoglutarate dehydrogenase family. Homodimer. Part of the 2-oxoglutarate dehydrogenase (OGDH) complex composed of E1 (2-oxoglutarate dehydrogenase), E2 (dihydrolipoamide succinyltransferase) and E3 (dihydrolipoamide dehydrogenase); the complex contains multiple copies of the three enzymatic components (E1, E2 and E3). Requires thiamine diphosphate as cofactor.

The enzyme catalyses N(6)-[(R)-lipoyl]-L-lysyl-[protein] + 2-oxoglutarate + H(+) = N(6)-[(R)-S(8)-succinyldihydrolipoyl]-L-lysyl-[protein] + CO2. Its function is as follows. E1 component of the 2-oxoglutarate dehydrogenase (OGDH) complex which catalyzes the decarboxylation of 2-oxoglutarate, the first step in the conversion of 2-oxoglutarate to succinyl-CoA and CO(2). This Brucella canis (strain ATCC 23365 / NCTC 10854 / RM-666) protein is 2-oxoglutarate dehydrogenase E1 component.